Consider the following 188-residue polypeptide: Elongation factor P (188 aa).

An N6-(3,6-diaminohexanoyl)-5-hydroxylysine modification is found at K34.

This sequence belongs to the elongation factor P family. In terms of processing, may be beta-lysylated on the epsilon-amino group of Lys-34 by the combined action of EpmA and EpmB, and then hydroxylated on the C5 position of the same residue by EpmC (if this protein is present). Lysylation is critical for the stimulatory effect of EF-P on peptide-bond formation. The lysylation moiety may extend toward the peptidyltransferase center and stabilize the terminal 3-CCA end of the tRNA. Hydroxylation of the C5 position on Lys-34 may allow additional potential stabilizing hydrogen-bond interactions with the P-tRNA.

The protein resides in the cytoplasm. The protein operates within protein biosynthesis; polypeptide chain elongation. Its function is as follows. Involved in peptide bond synthesis. Alleviates ribosome stalling that occurs when 3 or more consecutive Pro residues or the sequence PPG is present in a protein, possibly by augmenting the peptidyl transferase activity of the ribosome. Modification of Lys-34 is required for alleviation. This is Elongation factor P from Serratia proteamaculans (strain 568).